The primary structure comprises 554 residues: Hydroxylamine reductase (554 aa).

4 residues coordinate [2Fe-2S] cluster: Cys3, Cys6, Cys18, and Cys25. Positions 252, 276, 320, 408, 436, 461, 495, and 497 each coordinate hybrid [4Fe-2O-2S] cluster. Residue Cys408 is modified to Cysteine persulfide.

The protein belongs to the HCP family. Requires [2Fe-2S] cluster as cofactor. It depends on hybrid [4Fe-2O-2S] cluster as a cofactor.

The protein resides in the cytoplasm. The enzyme catalyses A + NH4(+) + H2O = hydroxylamine + AH2 + H(+). Its function is as follows. Catalyzes the reduction of hydroxylamine to form NH(3) and H(2)O. In Shewanella baltica (strain OS155 / ATCC BAA-1091), this protein is Hydroxylamine reductase.